The primary structure comprises 626 residues: ATP-dependent zinc metalloprotease FtsH (626 aa).

The Cytoplasmic portion of the chain corresponds to 1 to 5; that stretch reads MNFRN. A helical membrane pass occupies residues 6–26; that stretch reads LAIWLVIVAVLGGVFVVSQNS. At 27–98 the chain is on the periplasmic side; sequence RTKSSSEISY…DVKFKSGSIS (72 aa). The chain crosses the membrane as a helical span at residues 99–119; sequence FLAILVQLLPILLVVGVWLFL. Over 120–626 the chain is Cytoplasmic; sequence MRQMQGGAKG…SPGAGASVTA (507 aa). 191-198 is an ATP binding site; it reads GPPGTGKT. A Zn(2+)-binding site is contributed by histidine 413. Glutamate 414 is a catalytic residue. Histidine 417 and aspartate 491 together coordinate Zn(2+).

In the central section; belongs to the AAA ATPase family. It in the C-terminal section; belongs to the peptidase M41 family. Homohexamer. Requires Zn(2+) as cofactor.

The protein localises to the cell inner membrane. Acts as a processive, ATP-dependent zinc metallopeptidase for both cytoplasmic and membrane proteins. Plays a role in the quality control of integral membrane proteins. Functionally, absence of FtsH leads to increased sigma-32 levels, which suggests, in analogy to E.coli, that sigma-32 is a substrate for FtsH. May play a role in the general stress response, as overexpression leads to improved resistance to salt stress. This is ATP-dependent zinc metalloprotease FtsH from Caulobacter vibrioides (strain NA1000 / CB15N) (Caulobacter crescentus).